We begin with the raw amino-acid sequence, 23 residues long: Phospholipase A2 homolog 4 (23 aa).

Belongs to the phospholipase A2 family. Group II subfamily. K49 sub-subfamily. As to quaternary structure, homodimer; non-covalently linked (probable alternative/compact dimer conformation in solution). In terms of tissue distribution, expressed by the venom gland.

It localises to the secreted. Snake venom phospholipase A2 homolog that lacks enzymatic activity. Induces acute muscle damage after intramuscular injection in mice and disrupts negatively charged liposomes but not positively charged ones. Also exerts a weak anticoagulant effect only at concentrations of 40 ug/ml or higher. A model of myotoxic mechanism has been proposed: an apo Lys49-PLA2 is activated by the entrance of a hydrophobic molecule (e.g. fatty acid) at the hydrophobic channel of the protein leading to a reorientation of a monomer. This reorientation causes a transition between 'inactive' to 'active' states, causing alignment of C-terminal and membrane-docking sites (MDoS) side-by-side and putting the membrane-disruption sites (MDiS) in the same plane, exposed to solvent and in a symmetric position for both monomers. The MDoS region stabilizes the toxin on membrane by the interaction of charged residues with phospholipid head groups. Subsequently, the MDiS region destabilizes the membrane with penetration of hydrophobic residues. This insertion causes a disorganization of the membrane, allowing an uncontrolled influx of ions (i.e. calcium and sodium), and eventually triggering irreversible intracellular alterations and cell death. The chain is Phospholipase A2 homolog 4 from Bothrops asper (Terciopelo).